The following is a 157-amino-acid chain: 2-C-methyl-D-erythritol 2,4-cyclodiphosphate synthase (157 aa).

Aspartate 8 and histidine 10 together coordinate a divalent metal cation. 4-CDP-2-C-methyl-D-erythritol 2-phosphate-binding positions include 8-10 (DVH) and 34-35 (HS). Histidine 42 contacts a divalent metal cation. 4-CDP-2-C-methyl-D-erythritol 2-phosphate contacts are provided by residues 56-58 (DIG), 61-65 (FPDTD), 100-106 (AQAPKMA), 132-135 (TTTE), phenylalanine 139, and arginine 142.

The protein belongs to the IspF family. In terms of assembly, homotrimer. Requires a divalent metal cation as cofactor.

The catalysed reaction is 4-CDP-2-C-methyl-D-erythritol 2-phosphate = 2-C-methyl-D-erythritol 2,4-cyclic diphosphate + CMP. The protein operates within isoprenoid biosynthesis; isopentenyl diphosphate biosynthesis via DXP pathway; isopentenyl diphosphate from 1-deoxy-D-xylulose 5-phosphate: step 4/6. Involved in the biosynthesis of isopentenyl diphosphate (IPP) and dimethylallyl diphosphate (DMAPP), two major building blocks of isoprenoid compounds. Catalyzes the conversion of 4-diphosphocytidyl-2-C-methyl-D-erythritol 2-phosphate (CDP-ME2P) to 2-C-methyl-D-erythritol 2,4-cyclodiphosphate (ME-CPP) with a corresponding release of cytidine 5-monophosphate (CMP). This Pseudomonas syringae pv. tomato (strain ATCC BAA-871 / DC3000) protein is 2-C-methyl-D-erythritol 2,4-cyclodiphosphate synthase.